Consider the following 180-residue polypeptide: uncharacterized protein (180 aa).

Belongs to the isochorismatase family.

This is an uncharacterized protein from Bacillus subtilis (strain 168).